Here is a 382-residue protein sequence, read N- to C-terminus: Galactokinase (382 aa).

34-37 serves as a coordination point for substrate; sequence EHTD. Residue 124 to 130 participates in ATP binding; the sequence is GAGLSSS. Residues serine 130 and glutamate 162 each contribute to the Mg(2+) site. The active-site Proton acceptor is aspartate 174. Tyrosine 223 provides a ligand contact to substrate.

It belongs to the GHMP kinase family. GalK subfamily.

The protein localises to the cytoplasm. It catalyses the reaction alpha-D-galactose + ATP = alpha-D-galactose 1-phosphate + ADP + H(+). It participates in carbohydrate metabolism; galactose metabolism. Functionally, catalyzes the transfer of the gamma-phosphate of ATP to D-galactose to form alpha-D-galactose-1-phosphate (Gal-1-P). In Salmonella schwarzengrund (strain CVM19633), this protein is Galactokinase.